A 475-amino-acid chain; its full sequence is MKHKVKHVHFVGIGGSGMSGIAEVLLNLGFSVSGSDLADNATTRRLAGFGAKLYQGHAAEHLGESDVVVISSAVKDDNPEVVAARERNIPIIPRALMLAELMRFRQGIAIAGTHGKTTTTSLIASILAEAGMDPTFVIGGRLEASGSNARLGTGEYIVAEADESDASFLHLTPIISVVTNIDADHMDTYGHDFERLKGAFVEFLQRLPFYGMAVVCIDDPNVRAILPQISKQVMPYGFSEEARIRASNVQAENGRMHFTVTRINGVTTTFDVTLNLPGRHYVLNALAAIAVASELNVPDGAIIKALAEFKGVGRRFERYGEVPARDGGYFTLVDDYGHHPAEMNAVIAAARDAFPGRRLVLAFQPHRYTRTRDCFEDFVKVLSSADVVLLTEVYAAGEAPIVAADGRSLVRAIRVAGKVEPLFVETPQELPQSILDMAQDGDVVIVMGAGSIGQVAARTKEMAEVAEHVPMEAVR.

112-118 (GTHGKTT) is a binding site for ATP.

The protein belongs to the MurCDEF family.

It localises to the cytoplasm. The catalysed reaction is UDP-N-acetyl-alpha-D-muramate + L-alanine + ATP = UDP-N-acetyl-alpha-D-muramoyl-L-alanine + ADP + phosphate + H(+). The protein operates within cell wall biogenesis; peptidoglycan biosynthesis. In terms of biological role, cell wall formation. In Methylobacillus flagellatus (strain ATCC 51484 / DSM 6875 / VKM B-1610 / KT), this protein is UDP-N-acetylmuramate--L-alanine ligase.